A 330-amino-acid chain; its full sequence is tRNA dimethylallyltransferase (330 aa).

A compositionally biased stretch (polar residues) spans 1–11; sequence MDYSHSDSPST. The segment at 1-21 is disordered; the sequence is MDYSHSDSPSTAPAGKTPVDQ. 29-36 contacts ATP; the sequence is GPTGAGKS. 31–36 serves as a coordination point for substrate; the sequence is TGAGKS. An interaction with substrate tRNA region spans residues 56–59; that stretch reads DSMQ.

This sequence belongs to the IPP transferase family. As to quaternary structure, monomer. Mg(2+) serves as cofactor.

It carries out the reaction adenosine(37) in tRNA + dimethylallyl diphosphate = N(6)-dimethylallyladenosine(37) in tRNA + diphosphate. In terms of biological role, catalyzes the transfer of a dimethylallyl group onto the adenine at position 37 in tRNAs that read codons beginning with uridine, leading to the formation of N6-(dimethylallyl)adenosine (i(6)A). This Corynebacterium urealyticum (strain ATCC 43042 / DSM 7109) protein is tRNA dimethylallyltransferase.